The sequence spans 100 residues: Integration host factor subunit alpha (100 aa).

Residues 53 to 72 (FDLRDKKQRPGRNPKTGEEI) form a disordered region.

It belongs to the bacterial histone-like protein family. As to quaternary structure, heterodimer of an alpha and a beta chain.

Functionally, this protein is one of the two subunits of integration host factor, a specific DNA-binding protein that functions in genetic recombination as well as in transcriptional and translational control. This chain is Integration host factor subunit alpha, found in Marinobacter nauticus (strain ATCC 700491 / DSM 11845 / VT8) (Marinobacter aquaeolei).